Reading from the N-terminus, the 178-residue chain is Large ribosomal subunit protein uL6 (178 aa).

A disordered region spans residues 159 to 178 (GKGIRYEGEHVRRKEGKTGK).

This sequence belongs to the universal ribosomal protein uL6 family. As to quaternary structure, part of the 50S ribosomal subunit.

Functionally, this protein binds to the 23S rRNA, and is important in its secondary structure. It is located near the subunit interface in the base of the L7/L12 stalk, and near the tRNA binding site of the peptidyltransferase center. The sequence is that of Large ribosomal subunit protein uL6 from Listeria monocytogenes serotype 4b (strain CLIP80459).